The primary structure comprises 424 residues: Deoxyguanosinetriphosphate triphosphohydrolase-like protein (424 aa).

The tract at residues 1–27 (MYPYSDADAFRRQPERAKSSQLRTSAV) is disordered. The span at 8 to 18 (DAFRRQPERAK) shows a compositional bias: basic and acidic residues. Residues 67 to 217 (RLTHSLEVAQ…MDFSDDIAYS (151 aa)) enclose the HD domain.

Belongs to the dGTPase family. Type 2 subfamily.

This chain is Deoxyguanosinetriphosphate triphosphohydrolase-like protein (dgt), found in Corynebacterium glutamicum (strain ATCC 13032 / DSM 20300 / JCM 1318 / BCRC 11384 / CCUG 27702 / LMG 3730 / NBRC 12168 / NCIMB 10025 / NRRL B-2784 / 534).